A 224-amino-acid chain; its full sequence is 7-cyano-7-deazaguanine synthase (224 aa).

Residue 8-18 coordinates ATP; that stretch reads LSGGMDSAAVI. 4 residues coordinate Zn(2+): C186, C196, C199, and C202.

It belongs to the QueC family. Zn(2+) serves as cofactor.

It catalyses the reaction 7-carboxy-7-deazaguanine + NH4(+) + ATP = 7-cyano-7-deazaguanine + ADP + phosphate + H2O + H(+). It functions in the pathway purine metabolism; 7-cyano-7-deazaguanine biosynthesis. Its function is as follows. Catalyzes the ATP-dependent conversion of 7-carboxy-7-deazaguanine (CDG) to 7-cyano-7-deazaguanine (preQ(0)). In Xanthomonas euvesicatoria pv. vesicatoria (strain 85-10) (Xanthomonas campestris pv. vesicatoria), this protein is 7-cyano-7-deazaguanine synthase.